We begin with the raw amino-acid sequence, 154 residues long: Ribonuclease HI (154 aa).

An RNase H type-1 domain is found at 1-142; sequence MPKQIEIFTD…CDELAKKGAE (142 aa). Mg(2+) is bound by residues Asp-10, Glu-48, Asp-70, and Asp-134.

The protein belongs to the RNase H family. As to quaternary structure, monomer. Mg(2+) is required as a cofactor.

It localises to the cytoplasm. The catalysed reaction is Endonucleolytic cleavage to 5'-phosphomonoester.. Endonuclease that specifically degrades the RNA of RNA-DNA hybrids. The sequence is that of Ribonuclease HI (rnhA) from Haemophilus influenzae (strain ATCC 51907 / DSM 11121 / KW20 / Rd).